The chain runs to 186 residues: MTHRCLLQMVLLLCFSTTALSRSYSLLRFQQRRSLALCQKLLRQLPSTPQHCLEARMDFQMPEEMKQAQQFQKEDAILVIYEMLQQIFNILTRDFSSTGWSETIIEDLLEELYEQMNHLEPIQKEIMQKQNSTMGDTTVLHLRKYYFNLVQYLKSKEYNRCAWTVVRVQILRNFSFLTRLTGYLRE.

The first 21 residues, 1–21 (MTHRCLLQMVLLLCFSTTALS), serve as a signal peptide directing secretion. Residues cysteine 52 and cysteine 161 are joined by a disulfide bond. N-linked (GlcNAc...) asparagine glycans are attached at residues asparagine 131 and asparagine 173.

This sequence belongs to the alpha/beta interferon family. Monomer.

Its subcellular location is the secreted. In terms of biological role, has antiviral, antibacterial and anticancer activities. This is Interferon beta-2 (IFNB2) from Bos taurus (Bovine).